A 163-amino-acid polypeptide reads, in one-letter code: Phosphopantetheine adenylyltransferase (163 aa).

Serine 9 provides a ligand contact to substrate. Residues 9-10 (SF) and histidine 17 each bind ATP. The substrate site is built by lysine 41, threonine 73, and arginine 87. Residues 88 to 90 (GLR), glutamate 98, and 123 to 129 (YSYLSSS) each bind ATP.

The protein belongs to the bacterial CoaD family. As to quaternary structure, homohexamer. Mg(2+) is required as a cofactor.

Its subcellular location is the cytoplasm. It catalyses the reaction (R)-4'-phosphopantetheine + ATP + H(+) = 3'-dephospho-CoA + diphosphate. It functions in the pathway cofactor biosynthesis; coenzyme A biosynthesis; CoA from (R)-pantothenate: step 4/5. Functionally, reversibly transfers an adenylyl group from ATP to 4'-phosphopantetheine, yielding dephospho-CoA (dPCoA) and pyrophosphate. The polypeptide is Phosphopantetheine adenylyltransferase (Lachnoclostridium phytofermentans (strain ATCC 700394 / DSM 18823 / ISDg) (Clostridium phytofermentans)).